The chain runs to 347 residues: Ileal sodium/bile acid cotransporter (347 aa).

Topologically, residues 1 to 29 (MSNLTVGCLANATVCEGASCVAPESNFNA) are extracellular. N-linked (GlcNAc...) asparagine glycans are attached at residues N3 and N11. A helical transmembrane segment spans residues 30–50 (ILSVVLSTVLTILLALVMFSM). The Cytoplasmic segment spans residues 51-83 (GCNVEIKKFLGHIRRPWGIFIGFLCQFGIMPLT). The chain crosses the membrane as a helical span at residues 84-104 (GFVLAVAFGIMPIQAVVVLIM). Over 105–127 (GCCPGGTASNILAYWVDGDMDLS) the chain is Extracellular. The helical transmembrane segment at 128–148 (VSMTTCSTLLALGMMPLCLYV) threads the bilayer. Residues 149-158 (YTKMWVDSGT) lie on the Cytoplasmic side of the membrane. Residues 159–179 (IVIPYDNIGTSLVALVVPVSI) traverse the membrane as a helical segment. The Extracellular portion of the chain corresponds to 180 to 196 (GMFVNHKWPQKAKIILK). Residues 197–217 (VGSIAGAVLIVLIAVVGGILY) form a helical membrane-spanning segment. Residues 218–225 (QSAWIIEP) lie on the Cytoplasmic side of the membrane. A helical membrane pass occupies residues 226–246 (KLWIIGTIFPMAGYSLGFFLA). Residues 247–289 (RIAGQPWYRCRTVALETGMQNTQLCSTIVQLSFSPEDLTYVFT) are Extracellular-facing. A helical membrane pass occupies residues 290–310 (FPLIYSIFQIAFAAIFLGIYV). The Cytoplasmic portion of the chain corresponds to 311–347 (AYRKCHGKNDAEFPDIKDTKTEPESSFHQMNGGFQPE). Residues 323–335 (FPDIKDTKTEPES) show a composition bias toward basic and acidic residues. A disordered region spans residues 323 to 347 (FPDIKDTKTEPESSFHQMNGGFQPE). Phosphoserine is present on S336.

It belongs to the bile acid:sodium symporter (BASS) (TC 2.A.28) family. In terms of assembly, monomer and homodimer.

The protein resides in the membrane. It carries out the reaction taurocholate(out) + 2 Na(+)(out) = taurocholate(in) + 2 Na(+)(in). The catalysed reaction is cholate(out) + 2 Na(+)(out) = cholate(in) + 2 Na(+)(in). The enzyme catalyses taurochenodeoxycholate(out) + 2 Na(+)(out) = taurochenodeoxycholate(in) + 2 Na(+)(in). It catalyses the reaction tauroursodeoxycholate(out) + 2 Na(+)(out) = tauroursodeoxycholate(in) + 2 Na(+)(in). It carries out the reaction glycocholate(out) + 2 Na(+)(out) = glycocholate(in) + 2 Na(+)(in). The catalysed reaction is tauronorcholate(out) + 2 Na(+)(out) = tauronorcholate(in) + 2 Na(+)(in). The enzyme catalyses tauroallocholate(out) + 2 Na(+)(out) = tauroallocholate(in) + 2 Na(+)(in). It catalyses the reaction taurodeoxycholate(out) + 2 Na(+)(out) = taurodeoxycholate(in) + 2 Na(+)(in). It carries out the reaction tauro-beta-muricholate(out) + 2 Na(+)(out) = tauro-beta-muricholate(in) + 2 Na(+)(in). In terms of biological role, plays a critical role in the sodium-dependent reabsorption of bile acids from the lumen of the small intestine. Transports various bile acids, unconjugated or conjugated, such as cholate and taurocholate. Also responsible for bile acid transport in the renal proximal tubules, a salvage mechanism that helps conserve bile acids. Works collaboratively with the Na(+)-taurocholate cotransporting polypeptide (NTCP), the organic solute transporter (OST), and the bile salt export pump (BSEP), to ensure efficacious biological recycling of bile acids during enterohepatic circulation. The chain is Ileal sodium/bile acid cotransporter (SLC10A2) from Oryctolagus cuniculus (Rabbit).